A 129-amino-acid polypeptide reads, in one-letter code: Small ribosomal subunit protein uS11 (129 aa).

The protein belongs to the universal ribosomal protein uS11 family. Part of the 30S ribosomal subunit. Interacts with proteins S7 and S18. Binds to IF-3.

In terms of biological role, located on the platform of the 30S subunit, it bridges several disparate RNA helices of the 16S rRNA. Forms part of the Shine-Dalgarno cleft in the 70S ribosome. In Novosphingobium aromaticivorans (strain ATCC 700278 / DSM 12444 / CCUG 56034 / CIP 105152 / NBRC 16084 / F199), this protein is Small ribosomal subunit protein uS11.